The following is a 637-amino-acid chain: MTREQQAYDESQIQVLEGLEAVRKRPGMYIGSTSSRGLHHLVWEIVDNSIDEAMAGFCDEIGVVIEEDNSITVTDNGRGIPVGIHEKMGRPAVEVIMTVLHAGGKFGGGGYKVSGGLHGVGASVVNALSTMLEVEVHREGKVHYQKFHRGVPAADLEVIGTTDRTGTKIHFKPDGDIFTETTVFEYDTLASRLRELAFLNKGLRIKITDMREEEKSDEFHYEGGIASFVEHLNRTRETLHETPIHIEGEKQGVYVEIAVQYNDGFTSNIYSFANNINTHEGGTHESGFKTGLTRVINDYARKHNLFKESDPNLTGEDVREGLTAIISVKIPDPQFEGQTKTKLGNSEARTITDSLFTEHFSRFLIEHPQVARKLVDKGLMASRAREAAKKARELTRRKSALEVSSLPGKLADCSSRDASISEIYIVEGDSAGGSAKQGRDRHFQAILPLRGKILNVEKARLDKILANNEIRAIITALGTGIGDDFDIEKARYHKIIIMTDADVDGAHIRTLILTFFYRYMRPLIEHGYVYIAQPPLYKVQQGKDIQYAYGDAELQEILSQLPDKAKPGIQRYKGLGEMNPSQLWETTMDPGQRTVLQVTLEDAMKADEIFEILMGDRVEPRRDFIQENARYVKNLDI.

The Toprim domain maps to 421–535 (SEIYIVEGDS…HGYVYIAQPP (115 aa)). Mg(2+)-binding residues include E427, D500, and D502.

The protein belongs to the type II topoisomerase GyrB family. Heterotetramer, composed of two GyrA and two GyrB chains. In the heterotetramer, GyrA contains the active site tyrosine that forms a transient covalent intermediate with DNA, while GyrB binds cofactors and catalyzes ATP hydrolysis. It depends on Mg(2+) as a cofactor. Mn(2+) serves as cofactor. Requires Ca(2+) as cofactor.

It localises to the cytoplasm. It catalyses the reaction ATP-dependent breakage, passage and rejoining of double-stranded DNA.. A type II topoisomerase that negatively supercoils closed circular double-stranded (ds) DNA in an ATP-dependent manner to modulate DNA topology and maintain chromosomes in an underwound state. Negative supercoiling favors strand separation, and DNA replication, transcription, recombination and repair, all of which involve strand separation. Also able to catalyze the interconversion of other topological isomers of dsDNA rings, including catenanes and knotted rings. Type II topoisomerases break and join 2 DNA strands simultaneously in an ATP-dependent manner. This chain is DNA gyrase subunit B, found in Halalkalibacterium halodurans (strain ATCC BAA-125 / DSM 18197 / FERM 7344 / JCM 9153 / C-125) (Bacillus halodurans).